The primary structure comprises 721 residues: uncharacterized protein (721 aa).

The chain crosses the membrane as a helical span at residues 6-26 (QLIFVNFYVILIIWWFVMGIL). Residue 308–315 (GGTGSGKT) coordinates ATP.

Belongs to the GSP E family. In terms of processing, this protein undergoes a protein self splicing that involves a post-translational excision of the intervening region (intein) followed by peptide ligation.

It localises to the membrane. This is an uncharacterized protein from Methanocaldococcus jannaschii (strain ATCC 43067 / DSM 2661 / JAL-1 / JCM 10045 / NBRC 100440) (Methanococcus jannaschii).